We begin with the raw amino-acid sequence, 167 residues long: Crossover junction endodeoxyribonuclease RuvC (167 aa).

Residues aspartate 7, glutamate 67, and aspartate 140 contribute to the active site. Mg(2+) contacts are provided by aspartate 7, glutamate 67, and aspartate 140.

This sequence belongs to the RuvC family. Homodimer which binds Holliday junction (HJ) DNA. The HJ becomes 2-fold symmetrical on binding to RuvC with unstacked arms; it has a different conformation from HJ DNA in complex with RuvA. In the full resolvosome a probable DNA-RuvA(4)-RuvB(12)-RuvC(2) complex forms which resolves the HJ. Mg(2+) is required as a cofactor.

It localises to the cytoplasm. It carries out the reaction Endonucleolytic cleavage at a junction such as a reciprocal single-stranded crossover between two homologous DNA duplexes (Holliday junction).. Functionally, the RuvA-RuvB-RuvC complex processes Holliday junction (HJ) DNA during genetic recombination and DNA repair. Endonuclease that resolves HJ intermediates. Cleaves cruciform DNA by making single-stranded nicks across the HJ at symmetrical positions within the homologous arms, yielding a 5'-phosphate and a 3'-hydroxyl group; requires a central core of homology in the junction. The consensus cleavage sequence is 5'-(A/T)TT(C/G)-3'. Cleavage occurs on the 3'-side of the TT dinucleotide at the point of strand exchange. HJ branch migration catalyzed by RuvA-RuvB allows RuvC to scan DNA until it finds its consensus sequence, where it cleaves and resolves the cruciform DNA. The protein is Crossover junction endodeoxyribonuclease RuvC of Dehalococcoides mccartyi (strain ATCC BAA-2100 / JCM 16839 / KCTC 5957 / BAV1).